A 446-amino-acid polypeptide reads, in one-letter code: 4-aminobutyrate aminotransferase (446 aa).

N6-(pyridoxal phosphate)lysine is present on lysine 291.

It belongs to the class-III pyridoxal-phosphate-dependent aminotransferase family. It depends on pyridoxal 5'-phosphate as a cofactor.

The enzyme catalyses 4-aminobutanoate + 2-oxoglutarate = succinate semialdehyde + L-glutamate. The catalysed reaction is (S)-3-amino-2-methylpropanoate + 2-oxoglutarate = 2-methyl-3-oxopropanoate + L-glutamate. The protein operates within amino-acid degradation; 4-aminobutanoate degradation. The chain is 4-aminobutyrate aminotransferase (gabT) from Mycobacterium leprae (strain TN).